Here is a 141-residue protein sequence, read N- to C-terminus: uncharacterized protein (141 aa).

A helical transmembrane segment spans residues 13–35 (PVIGVILMVAITVILAAVIASFV).

The protein resides in the membrane. This is an uncharacterized protein from Archaeoglobus fulgidus (strain ATCC 49558 / DSM 4304 / JCM 9628 / NBRC 100126 / VC-16).